The sequence spans 671 residues: DNA ligase (671 aa).

NAD(+) contacts are provided by residues 31–35, 80–81, and Glu110; these read DAEYD and SL. Residue Lys112 is the N6-AMP-lysine intermediate of the active site. 4 residues coordinate NAD(+): Arg133, Glu167, Lys283, and Lys307. Cys401, Cys404, Cys419, and Cys424 together coordinate Zn(2+). Residues 587-671 enclose the BRCT domain; it reads EEELVFAGKT…YLPDEGGLNE (85 aa).

Belongs to the NAD-dependent DNA ligase family. LigA subfamily. It depends on Mg(2+) as a cofactor. The cofactor is Mn(2+).

The catalysed reaction is NAD(+) + (deoxyribonucleotide)n-3'-hydroxyl + 5'-phospho-(deoxyribonucleotide)m = (deoxyribonucleotide)n+m + AMP + beta-nicotinamide D-nucleotide.. DNA ligase that catalyzes the formation of phosphodiester linkages between 5'-phosphoryl and 3'-hydroxyl groups in double-stranded DNA using NAD as a coenzyme and as the energy source for the reaction. It is essential for DNA replication and repair of damaged DNA. The protein is DNA ligase of Listeria monocytogenes serotype 4a (strain HCC23).